Reading from the N-terminus, the 945-residue chain is Leucine--tRNA ligase (945 aa).

Positions 43-53 (PYPNGAIHIGH) match the 'HIGH' region motif. Positions 638-642 (KMSKS) match the 'KMSKS' region motif. Lysine 641 contributes to the ATP binding site.

It belongs to the class-I aminoacyl-tRNA synthetase family.

It is found in the cytoplasm. The enzyme catalyses tRNA(Leu) + L-leucine + ATP = L-leucyl-tRNA(Leu) + AMP + diphosphate. The polypeptide is Leucine--tRNA ligase (Pyrobaculum arsenaticum (strain DSM 13514 / JCM 11321 / PZ6)).